The following is a 126-amino-acid chain: Aspartate 1-decarboxylase (126 aa).

Serine 25 (schiff-base intermediate with substrate; via pyruvic acid) is an active-site residue. Serine 25 is modified (pyruvic acid (Ser)). Residue threonine 57 coordinates substrate. Tyrosine 58 acts as the Proton donor in catalysis. Residue 73 to 75 (GAA) coordinates substrate.

Belongs to the PanD family. Heterooctamer of four alpha and four beta subunits. Pyruvate is required as a cofactor. In terms of processing, is synthesized initially as an inactive proenzyme, which is activated by self-cleavage at a specific serine bond to produce a beta-subunit with a hydroxyl group at its C-terminus and an alpha-subunit with a pyruvoyl group at its N-terminus.

Its subcellular location is the cytoplasm. The enzyme catalyses L-aspartate + H(+) = beta-alanine + CO2. The protein operates within cofactor biosynthesis; (R)-pantothenate biosynthesis; beta-alanine from L-aspartate: step 1/1. In terms of biological role, catalyzes the pyruvoyl-dependent decarboxylation of aspartate to produce beta-alanine. The polypeptide is Aspartate 1-decarboxylase (Photorhabdus laumondii subsp. laumondii (strain DSM 15139 / CIP 105565 / TT01) (Photorhabdus luminescens subsp. laumondii)).